Reading from the N-terminus, the 212-residue chain is RNA chaperone ProQ (212 aa).

The disordered stretch occupies residues 107-153 (QDKAKAKRVAQAKSANPAAKTAKKPVKKPVAKRPKPAQSSKPAKEPV). The span at 117–126 (QAKSANPAAK) shows a compositional bias: low complexity. Residues 127-141 (TAKKPVKKPVAKRPK) show a composition bias toward basic residues.

Belongs to the ProQ family.

It localises to the cytoplasm. In terms of biological role, RNA chaperone with significant RNA binding, RNA strand exchange and RNA duplexing activities. In Shewanella pealeana (strain ATCC 700345 / ANG-SQ1), this protein is RNA chaperone ProQ.